Consider the following 203-residue polypeptide: dITP/XTP pyrophosphatase (203 aa).

7–12 provides a ligand contact to substrate; that stretch reads TGNRDK. Asp-73 acts as the Proton acceptor in catalysis. Asp-73 provides a ligand contact to Mg(2+). Substrate contacts are provided by residues Ser-74, 155–158, Lys-178, and 183–184; these read FGYD and HR.

This sequence belongs to the HAM1 NTPase family. As to quaternary structure, homodimer. It depends on Mg(2+) as a cofactor.

The enzyme catalyses XTP + H2O = XMP + diphosphate + H(+). The catalysed reaction is dITP + H2O = dIMP + diphosphate + H(+). It carries out the reaction ITP + H2O = IMP + diphosphate + H(+). Pyrophosphatase that catalyzes the hydrolysis of nucleoside triphosphates to their monophosphate derivatives, with a high preference for the non-canonical purine nucleotides XTP (xanthosine triphosphate), dITP (deoxyinosine triphosphate) and ITP. Seems to function as a house-cleaning enzyme that removes non-canonical purine nucleotides from the nucleotide pool, thus preventing their incorporation into DNA/RNA and avoiding chromosomal lesions. This Wolinella succinogenes (strain ATCC 29543 / DSM 1740 / CCUG 13145 / JCM 31913 / LMG 7466 / NCTC 11488 / FDC 602W) (Vibrio succinogenes) protein is dITP/XTP pyrophosphatase.